A 434-amino-acid polypeptide reads, in one-letter code: MTVKTETAAGASTLTYSKMRGMVALLIAFMKQRRMGLNEFIQKIATNSSYSCKPSEVQSILNISPPQESELLNENSSPPPSHSQQINLGPSSNPHAKPSDFQFLKIIGKGSFGKVLLARHKADEKFYAVKVLQKKAILKKKEEKHIMSERNVLLKNVKHPFLVGLHFSIQTTSRLYFILDYINGGELFYHLQRERCFLEPRARFYAAEIASALGYLHSLNIVYRDLKPENILLDSQGHIVLTDFGLCKENIEPNGITSTFCGTPEYLAPEVLHKQPYDRTVDWWCLGAVLYEMLYGLPPFYSRNTAEMYDNILNKPLQLKPNITNSARNLLEGLLQKDRTKRTGAKTDFMEIKNHIFFSPIDWDDLINKKITPPFNPNVSGPSDLQHFDPEFTDEPVPNSIGQSPDSILITASIKEAAEAFMGFSYAPPMDSYL.

The disordered stretch occupies residues 68-94 (ESELLNENSSPPPSHSQQINLGPSSNP). The Protein kinase domain occupies 101–358 (FQFLKIIGKG…FMEIKNHIFF (258 aa)). ATP-binding positions include 107 to 115 (IGKGSFGKV) and K130. The Proton acceptor role is filled by D225. The region spanning 359-434 (SPIDWDDLIN…SYAPPMDSYL (76 aa)) is the AGC-kinase C-terminal domain.

It belongs to the protein kinase superfamily. AGC Ser/Thr protein kinase family.

It is found in the cytoplasm. Its subcellular location is the nucleus. The protein resides in the endoplasmic reticulum. It catalyses the reaction L-seryl-[protein] + ATP = O-phospho-L-seryl-[protein] + ADP + H(+). It carries out the reaction L-threonyl-[protein] + ATP = O-phospho-L-threonyl-[protein] + ADP + H(+). Protein kinase that may play an important role in cellular stress response. Plays an important role in activating certain potassium, sodium, and chloride channels, suggesting an involvement in the regulation of processes such as cell survival, neuronal excitability and renal sodium excretion. The polypeptide is Serine/threonine-protein kinase Sgk1-B (sgk1-b) (Xenopus laevis (African clawed frog)).